A 628-amino-acid polypeptide reads, in one-letter code: Hepatocyte nuclear factor 1-alpha (628 aa).

Residues 1–31 (MVSKLSQLQTELLAALLESGLSKEALIQALG) are dimerization. Residues 1 to 32 (MVSKLSQLQTELLAALLESGLSKEALIQALGE) enclose the HNF-p1 domain. Residues 47-79 (GESCGGTRGDLTELPNGLGETRGSEDDTDDDGE) are disordered. A Phosphoserine modification is found at Ser-70. Thr-74 is modified (phosphothreonine). The region spanning 87–182 (KELENLSPEE…VAQQFTHAGQ (96 aa)) is the POU-specific atypical domain. Ser-93 is modified (phosphoserine). A Glycyl lysine isopeptide (Lys-Gly) (interchain with G-Cter in ubiquitin) cross-link involves residue Lys-117. Interaction with DNA regions lie at residues 130-132 (QRE), 143-149 (HLSQHLN), 155-158 (KTQK), and 203-206 (RFKW). The tract at residues 183–205 (GGLIEEPTGDELPTKKGRRNRFK) is disordered. The Nuclear localization signal signature appears at 197–205 (KKGRRNRFK). Positions 199-279 (GRRNRFKWGP…NRRKEEAFRH (81 aa)) form a DNA-binding region, homeobox; HNF1-type. Ser-247 carries the post-translational modification Phosphoserine. Interaction with DNA regions lie at residues 263–265 (RVY) and 270–273 (NRRK). Disordered regions lie at residues 284-338 (DTYN…SSSG) and 541-585 (FTSD…LSTS). The span at 288 to 298 (GPPPGPGPGPA) shows a compositional bias: pro residues. Ser-313 is modified (phosphoserine). 2 stretches are compositionally biased toward polar residues: residues 324 to 338 (QSAT…SSSG) and 558 to 575 (SPAT…NIQH).

The protein belongs to the HNF1 homeobox family. Binds DNA as a dimer. Heterotetramer with PCBD1; formed by a dimer of dimers. Interacts with PCBD1. Interacts with BHLHE41. Interacts with NR5A2. Interacts with SPOP; this interaction promotes ubiquitination and degradation of HNF1A. Ubiquitinated in s SPOP-dependent manner; leading to prteasomal degradation. In terms of tissue distribution, liver.

The protein resides in the nucleus. In terms of biological role, transcriptional activator that regulates the tissue specific expression of multiple genes, especially in pancreatic islet cells and in liver. Binds to the inverted palindrome 5'-GTTAATNATTAAC-3'. Activates the transcription of CYP1A2, CYP2E1 and CYP3A11. The sequence is that of Hepatocyte nuclear factor 1-alpha (Hnf1a) from Rattus norvegicus (Rat).